The following is a 285-amino-acid chain: Release factor glutamine methyltransferase (285 aa).

The S-adenosyl-L-methionine site is built by Asp143 and Asn189. 189-192 provides a ligand contact to substrate; that stretch reads NPPY.

Belongs to the protein N5-glutamine methyltransferase family. PrmC subfamily.

It catalyses the reaction L-glutaminyl-[peptide chain release factor] + S-adenosyl-L-methionine = N(5)-methyl-L-glutaminyl-[peptide chain release factor] + S-adenosyl-L-homocysteine + H(+). Methylates the class 1 translation termination release factors RF1/PrfA and RF2/PrfB on the glutamine residue of the universally conserved GGQ motif. The protein is Release factor glutamine methyltransferase of Clostridium acetobutylicum (strain ATCC 824 / DSM 792 / JCM 1419 / IAM 19013 / LMG 5710 / NBRC 13948 / NRRL B-527 / VKM B-1787 / 2291 / W).